The sequence spans 338 residues: MSGDFLIKNLSTSAWKTNITVLNGSYYIDTSVCVTRNQAMILLSIIISLVGMGLNAIVLWFLGIRMHTNAFTVYILNLAMADFLYLCSQFVICLLIAFYIFYSIDINIPLVLYVVPIFAYLSGLSILSTISIERCLSVIWPIWYRCKRPRHTSAITCFVLWVMSLLLGLLEGKACGLLFNSFDSYWCETFDVITNIWSVVFFGVLCGSSLTLLVRIFCGSQRIPMTRLYVTITLTVLVFLIFGLPFGIYWILYQWISNFYYVEICNFYLEILFLSCVNSCMNPIIYFLVGSIRHRRFRRKTLKLLLQRAMQDTPEEEQSGNKSSSEHPEELETVQSCS.

Over methionine 1–methionine 40 the chain is Extracellular. Asparagine 9, asparagine 18, and asparagine 23 each carry an N-linked (GlcNAc...) asparagine glycan. The helical transmembrane segment at isoleucine 41–phenylalanine 61 threads the bilayer. The Cytoplasmic portion of the chain corresponds to leucine 62–glutamine 89. A helical membrane pass occupies residues phenylalanine 90–leucine 110. A topological domain (extracellular) is located at residue valine 111. A helical transmembrane segment spans residues leucine 112–isoleucine 132. Over glutamate 133–cysteine 157 the chain is Cytoplasmic. A helical membrane pass occupies residues phenylalanine 158–leucine 178. Residues phenylalanine 179–aspartate 191 are Extracellular-facing. Residues valine 192–leucine 212 traverse the membrane as a helical segment. At leucine 213–threonine 231 the chain is on the cytoplasmic side. A helical transmembrane segment spans residues isoleucine 232–leucine 252. Over tyrosine 253–tyrosine 268 the chain is Extracellular. The helical transmembrane segment at leucine 269–valine 289 threads the bilayer. Residues glycine 290–serine 338 are Cytoplasmic-facing. A disordered region spans residues methionine 310–serine 338.

This sequence belongs to the G-protein coupled receptor 1 family. Mas subfamily. As to expression, mast cell-specific.

It localises to the cell membrane. In terms of biological role, mast cell-specific receptor for basic secretagogues, i.e. cationic amphiphilic drugs, as well as endo- or exogenous peptides, consisting of a basic head group and a hydrophobic core. Recognizes and binds small molecules containing a cyclized tetrahydroisoquinoline (THIQ), such as non-steroidal neuromuscular blocking drugs (NMBDs), including tubocurarine and atracurium. In response to these compounds, mediates pseudo-allergic reactions characterized by histamine release, inflammation and airway contraction. This Mus musculus (Mouse) protein is Mas-related G-protein coupled receptor member B2 (Mrgprb2).